We begin with the raw amino-acid sequence, 172 residues long: UPF0102 protein AM1_3954 (172 aa).

This sequence belongs to the UPF0102 family.

This Acaryochloris marina (strain MBIC 11017) protein is UPF0102 protein AM1_3954.